A 209-amino-acid polypeptide reads, in one-letter code: Large ribosomal subunit protein uL3 (209 aa).

The disordered stretch occupies residues 118-151 (GFQGAIKRHGQSRGPMSHGSRYHRRPGSMGPVAP).

This sequence belongs to the universal ribosomal protein uL3 family. Part of the 50S ribosomal subunit. Forms a cluster with proteins L14 and L19.

Functionally, one of the primary rRNA binding proteins, it binds directly near the 3'-end of the 23S rRNA, where it nucleates assembly of the 50S subunit. This Enterococcus faecalis (strain ATCC 700802 / V583) protein is Large ribosomal subunit protein uL3.